The following is a 484-amino-acid chain: Ubiquinone biosynthesis monooxygenase COQ6, mitochondrial (484 aa).

The N-terminal 41 residues, 1-41 (MLSLAKAKLAVVGIGRQCVAVRTLNGARAVHRSFSSSEHDQ), are a transit peptide targeting the mitochondrion.

The protein belongs to the UbiH/COQ6 family. As to quaternary structure, component of a multi-subunit COQ enzyme complex, composed of at least coq3, coq4, coq5, coq6, coq7 and coq9. Interacts with coq8b and coq7. The cofactor is FAD.

The protein resides in the mitochondrion inner membrane. It localises to the golgi apparatus. It is found in the cell projection. The enzyme catalyses a 4-hydroxy-3-(all-trans-polyprenyl)benzoate + 2 reduced [2Fe-2S]-[ferredoxin] + O2 + 2 H(+) = a 3,4-dihydroxy-5-(all-trans-polyprenyl)benzoate + 2 oxidized [2Fe-2S]-[ferredoxin] + H2O. It catalyses the reaction a 2-methoxy-6-(all-trans-polyprenyl)phenol + 2 reduced [2Fe-2S]-[ferredoxin] + O2 + 2 H(+) = a 2-methoxy-6-(all-trans-polyprenyl)benzene-1,4-diol + 2 oxidized [2Fe-2S]-[ferredoxin] + H2O. The protein operates within cofactor biosynthesis; ubiquinone biosynthesis. Its function is as follows. FAD-dependent monooxygenase required for two non-consecutive steps during ubiquinone biosynthesis. Required for the C5-ring hydroxylation during ubiquinone biosynthesis by catalyzing the hydroxylation of 4-hydroxy-3-(all-trans-polyprenyl)benzoic acid to 3,4-dihydroxy-5-(all-trans-polyprenyl)benzoic acid. Also acts downstream of coq4, for the C1-hydroxylation during ubiquinone biosynthesis by catalyzing the hydroxylation of 2-methoxy-6-(all-trans-polyprenyl)phenol to 2-methoxy-6-(all-trans-polyprenyl)benzene-1,4-diol. The electrons required for the hydroxylation reaction are funneled indirectly to coq6 from NADPH via a ferredoxin/ferredoxin reductase system. The protein is Ubiquinone biosynthesis monooxygenase COQ6, mitochondrial of Danio rerio (Zebrafish).